Consider the following 129-residue polypeptide: Follitropin subunit beta (129 aa).

Residues 1-18 form the signal peptide; it reads MKSVQLCLLLWCWRAICC. Disulfide bonds link Cys-21-Cys-69, Cys-35-Cys-84, Cys-38-Cys-122, Cys-46-Cys-100, Cys-50-Cys-102, and Cys-105-Cys-112. Asn-25 and Asn-42 each carry an N-linked (GlcNAc...) asparagine glycan.

The protein belongs to the glycoprotein hormones subunit beta family. In terms of assembly, heterodimer. The active follitropin is a heterodimer composed of an alpha chain/CGA shared with other hormones and a unique beta chain/FSHB shown here.

The protein localises to the secreted. In terms of biological role, together with the alpha chain CGA constitutes follitropin, the follicle-stimulating hormone, and provides its biological specificity to the hormone heterodimer. Binds FSHR, a G protein-coupled receptor, on target cells to activate downstream signaling pathways. Follitropin is involved in follicle development and spermatogenesis in reproductive organs. The chain is Follitropin subunit beta (FSHB) from Meriones unguiculatus (Mongolian jird).